Consider the following 148-residue polypeptide: 3-dehydroquinate dehydratase (148 aa).

The Proton acceptor role is filled by Y26. Substrate-binding residues include N75, H81, and D88. The active-site Proton donor is H101. Substrate-binding positions include 102–103 (LS) and R112.

It belongs to the type-II 3-dehydroquinase family. As to quaternary structure, homododecamer.

The enzyme catalyses 3-dehydroquinate = 3-dehydroshikimate + H2O. It participates in metabolic intermediate biosynthesis; chorismate biosynthesis; chorismate from D-erythrose 4-phosphate and phosphoenolpyruvate: step 3/7. Its function is as follows. Catalyzes a trans-dehydration via an enolate intermediate. In Shewanella frigidimarina (strain NCIMB 400), this protein is 3-dehydroquinate dehydratase.